A 1155-amino-acid polypeptide reads, in one-letter code: MHC class II transactivator (1155 aa).

Residues 171–210 (AYANIAELDQYVFQDTQLEGLSKDLFIEHIGAEEGFGENI) form a required for acetyltransferase activity region. 2 disordered regions span residues 217-237 (GQKP…KHRK) and 297-357 (SLSI…IKLP). The span at 224 to 233 (RFPEEHAMDS) shows a compositional bias: basic and acidic residues. Residues 439 to 749 (QVVAVLGKAG…CFLGAVWLAQ (311 aa)) enclose the NACHT domain. 445–452 (GKAGQGKS) provides a ligand contact to GTP. LRR repeat units lie at residues 1010-1033 (SLQH…SKLS), 1041-1062 (ALET…KLAE), 1070-1091 (SLLR…SLAQ), and 1098-1119 (SLRV…QLAS).

Interacts with ZXDA and ZXDC. Interacts with PML (isoform PML-2). Interacts with TAF7; interaction inhibits CIITA acetyltransferase activity, thereby repressing transcription. In terms of processing, autophosphorylated, affecting interaction with TAF7. In terms of tissue distribution, expressed at very high levels in dendritic cells, at very low levels in spleen and thymus and is not detected in other tissues. As to expression, detected at high levels in spleen and tonsil as well as in a number of B-lymphocyte cell lines, and at very low levels in dendritic cells.

It localises to the nucleus. Its subcellular location is the PML body. It carries out the reaction L-seryl-[protein] + ATP = O-phospho-L-seryl-[protein] + ADP + H(+). It catalyses the reaction L-threonyl-[protein] + ATP = O-phospho-L-threonyl-[protein] + ADP + H(+). Functionally, essential for transcriptional activity of the HLA class II promoter; activation is via the proximal promoter. Does not bind DNA. May act in a coactivator-like fashion through protein-protein interactions by contacting factors binding to the proximal MHC class II promoter, to elements of the transcription machinery, or both. Alternatively it may activate HLA class II transcription by modifying proteins that bind to the MHC class II promoter. Also mediates enhanced MHC class I transcription, the promoter element requirements for CIITA-mediated transcription are distinct from those of constitutive MHC class I transcription, and CIITA can functionally replace TAF1 at these genes. Activates CD74 transcription. Exhibits intrinsic GTP-stimulated acetyltransferase activity. Exhibits serine/threonine protein kinase activity: phosphorylates the TFIID component TAF7, the RAP74 subunit of the general transcription factor TFIIF, histone H2B at 'Ser-37' and other histones. The sequence is that of MHC class II transactivator from Mus musculus (Mouse).